Here is a 180-residue protein sequence, read N- to C-terminus: Early nodulin-16 (180 aa).

The N-terminal stretch at 1-22 (MASSSPILLMIIFSMWLLISHS) is a signal peptide. Residues 25 to 129 (TDYLIGDSHN…GLKLAVVVQN (105 aa)) form the Phytocyanin domain. N-linked (GlcNAc...) asparagine glycosylation occurs at N67. The cysteines at positions 83 and 117 are disulfide-linked. The N-linked (GlcNAc...) asparagine glycan is linked to N152. The GPI-anchor amidated serine moiety is linked to residue S154. Residues 155-180 (GNKGGAAGLGFIMWLGVSLVMMMFLI) constitute a propeptide, removed in mature form.

The protein belongs to the early nodulin-like (ENODL) family. Expressed in developing nodules upon symbiosis with Sinorhizobium meliloti.

Its subcellular location is the symbiosome. The protein localises to the cell membrane. Functionally, may act as a carbohydrate transporter. The polypeptide is Early nodulin-16 (Medicago truncatula (Barrel medic)).